The following is a 494-amino-acid chain: Probable malate:quinone oxidoreductase (494 aa).

The protein belongs to the MQO family. It depends on FAD as a cofactor.

It catalyses the reaction (S)-malate + a quinone = a quinol + oxaloacetate. The protein operates within carbohydrate metabolism; tricarboxylic acid cycle; oxaloacetate from (S)-malate (quinone route): step 1/1. The chain is Probable malate:quinone oxidoreductase from Micrococcus luteus (strain ATCC 4698 / DSM 20030 / JCM 1464 / CCM 169 / CCUG 5858 / IAM 1056 / NBRC 3333 / NCIMB 9278 / NCTC 2665 / VKM Ac-2230) (Micrococcus lysodeikticus).